Reading from the N-terminus, the 490-residue chain is N-succinylglutamate 5-semialdehyde dehydrogenase (490 aa).

NAD(+) is bound at residue 224 to 229; sequence GSSPTG. Residues Glu247 and Cys281 contribute to the active site.

This sequence belongs to the aldehyde dehydrogenase family. AstD subfamily.

It carries out the reaction N-succinyl-L-glutamate 5-semialdehyde + NAD(+) + H2O = N-succinyl-L-glutamate + NADH + 2 H(+). It functions in the pathway amino-acid degradation; L-arginine degradation via AST pathway; L-glutamate and succinate from L-arginine: step 4/5. Functionally, catalyzes the NAD-dependent reduction of succinylglutamate semialdehyde into succinylglutamate. The protein is N-succinylglutamate 5-semialdehyde dehydrogenase of Hahella chejuensis (strain KCTC 2396).